The following is a 226-amino-acid chain: Small ribosomal subunit protein uS3 (226 aa).

The region spanning 39-109 is the KH type-2 domain; the sequence is IYKFFDKFTR…KLDVNLKVLT (71 aa).

It belongs to the universal ribosomal protein uS3 family. Part of the 30S ribosomal subunit. Forms a tight complex with proteins S10 and S14.

In terms of biological role, binds the lower part of the 30S subunit head. Binds mRNA in the 70S ribosome, positioning it for translation. This is Small ribosomal subunit protein uS3 from Mycoplasmopsis synoviae (strain 53) (Mycoplasma synoviae).